A 91-amino-acid chain; its full sequence is RNA-binding protein Hfq (91 aa).

In terms of domain architecture, Sm spans 9–68 (DPYLNALRRERIPVSIYLVNGIKLQGQIESFDQFVILLKNTVNQMVYKHAISTVVPARSV). Residues 69-91 (SHHNNNHHTAPTEAVENVETQAE) are disordered.

This sequence belongs to the Hfq family. As to quaternary structure, homohexamer.

Its function is as follows. RNA chaperone that binds small regulatory RNA (sRNAs) and mRNAs to facilitate mRNA translational regulation in response to envelope stress, environmental stress and changes in metabolite concentrations. Also binds with high specificity to tRNAs. This Haemophilus influenzae (strain ATCC 51907 / DSM 11121 / KW20 / Rd) protein is RNA-binding protein Hfq.